Reading from the N-terminus, the 507-residue chain is ATP synthase subunit alpha, chloroplastic (507 aa).

ATP is bound at residue 170 to 177 (GDRQTGKT).

It belongs to the ATPase alpha/beta chains family. As to quaternary structure, F-type ATPases have 2 components, CF(1) - the catalytic core - and CF(0) - the membrane proton channel. CF(1) has five subunits: alpha(3), beta(3), gamma(1), delta(1), epsilon(1). CF(0) has four main subunits: a, b, b' and c.

It localises to the plastid. It is found in the chloroplast thylakoid membrane. The catalysed reaction is ATP + H2O + 4 H(+)(in) = ADP + phosphate + 5 H(+)(out). Functionally, produces ATP from ADP in the presence of a proton gradient across the membrane. The alpha chain is a regulatory subunit. This chain is ATP synthase subunit alpha, chloroplastic, found in Cycas taitungensis (Prince sago).